The chain runs to 413 residues: GTPase HflX (413 aa).

Residues 200-386 form the Hflx-type G domain; the sequence is VRVALVGYTN…KVYETVREIH (187 aa). Residues 206 to 213, 231 to 235, 252 to 255, 318 to 321, and 364 to 366 contribute to the GTP site; these read GYTNVGKS, FATLD, DTVG, NKID, and SAT. Residues Ser-213 and Thr-233 each contribute to the Mg(2+) site.

The protein belongs to the TRAFAC class OBG-HflX-like GTPase superfamily. HflX GTPase family. In terms of assembly, monomer. Associates with the 50S ribosomal subunit. Mg(2+) is required as a cofactor.

The protein localises to the cytoplasm. In terms of biological role, GTPase that associates with the 50S ribosomal subunit and may have a role during protein synthesis or ribosome biogenesis. This chain is GTPase HflX, found in Flavobacterium psychrophilum (strain ATCC 49511 / DSM 21280 / CIP 103535 / JIP02/86).